Consider the following 696-residue polypeptide: Elongation factor G (696 aa).

Positions 8 to 290 (ERYRNIGIMA…AVLDYLPSPL (283 aa)) constitute a tr-type G domain. GTP is bound by residues 17 to 24 (AHIDAGKT), 88 to 92 (DTPGH), and 142 to 145 (NKMD).

The protein belongs to the TRAFAC class translation factor GTPase superfamily. Classic translation factor GTPase family. EF-G/EF-2 subfamily.

It localises to the cytoplasm. In terms of biological role, catalyzes the GTP-dependent ribosomal translocation step during translation elongation. During this step, the ribosome changes from the pre-translocational (PRE) to the post-translocational (POST) state as the newly formed A-site-bound peptidyl-tRNA and P-site-bound deacylated tRNA move to the P and E sites, respectively. Catalyzes the coordinated movement of the two tRNA molecules, the mRNA and conformational changes in the ribosome. This is Elongation factor G from Nitrosomonas eutropha (strain DSM 101675 / C91 / Nm57).